Consider the following 895-residue polypeptide: Stonin-2 (895 aa).

Disordered stretches follow at residues 10 to 101 (THQS…AISN), 144 to 204 (ASES…METI), and 236 to 279 (NEVG…PKST). Residues 64–73 (SHSEQDDSSE) are compositionally biased toward basic and acidic residues. 2 stretches are compositionally biased toward polar residues: residues 145-169 (SESS…TDLQ) and 179-193 (GRAS…SSSL). Residues Ser278, Ser284, and Ser299 each carry the phosphoserine modification. 2 disordered regions span residues 291–326 (ISSL…SPIN) and 386–424 (QIDD…PRDG). 2 consecutive short sequence motifs (NPF) follow at residues 310 to 312 (NPF) and 326 to 328 (NPF). The span at 311–323 (PFLNESLQDIQPS) shows a compositional bias: polar residues. Residues 424 to 557 (GWPMMLRIPE…DLPVQSMDLS (134 aa)) form the SHD domain. Residues 565 to 872 (EEEITVDIRD…AHYSYKVEIE (308 aa)) form the MHD domain. Residue Ser759 is modified to Phosphoserine.

Belongs to the Stoned B family. Interacts with the second C2 domain of synaptotagmins SYT1 and SYT2. Interacts with EPS15, EPS15R and ITSN1. Interacts indirectly with the AP-2 adapter complex. Interacts with TOR1A and COPS4; the interaction controls STON2 protein stability. Post-translationally, phosphorylated in vitro by PKD. In terms of processing, neddylated and ubiquitinated; leading to its degradation and inhibited by TOR1A and COPS4.

It localises to the synapse. It is found in the synaptosome. Its subcellular location is the cytoplasm. The protein resides in the membrane. In terms of biological role, adapter protein involved in endocytic machinery. Involved in the synaptic vesicle recycling. May facilitate clathrin-coated vesicle uncoating. In Rattus norvegicus (Rat), this protein is Stonin-2 (Ston2).